The primary structure comprises 567 residues: Allo-aromadendrene synthase TPS4FN (567 aa).

The (2E,6E)-farnesyl diphosphate site is built by Arg-282, Asp-319, Asp-323, Arg-462, and Asp-465. Mg(2+) contacts are provided by Asp-319 and Asp-323. The short motif at 319–323 (DDIYD) is the DDXXD motif element. Residues Asp-465 and Glu-473 each coordinate Mg(2+).

Belongs to the terpene synthase family. Tpsb subfamily. It depends on Mg(2+) as a cofactor. Mn(2+) serves as cofactor.

It catalyses the reaction (2E,6E)-farnesyl diphosphate = alpha-humulene + diphosphate. It carries out the reaction (2E,6E)-farnesyl diphosphate = (+)-valencene + diphosphate. The enzyme catalyses (2E)-geranyl diphosphate = beta-myrcene + diphosphate. The catalysed reaction is (2E,6E)-farnesyl diphosphate = allo-aromadendrene + diphosphate. It catalyses the reaction (2E,6E)-farnesyl diphosphate + H2O = palustrol + diphosphate. It participates in secondary metabolite biosynthesis; terpenoid biosynthesis. Involved in sesquiterpene olefins biosynthesis, constituants of cannabinoids and terpenoids-rich resins. Catalyzes mainly the conversion of (2E)-farnesyl diphosphate to allo-aromadendrene, and also produces minor products such as alpha-humulene, valencene and palustrol. Can also use (2E)-geranyl diphosphate as substrate with low efficiency, producing minor amounts of myrcene. This is Allo-aromadendrene synthase TPS4FN from Cannabis sativa (Hemp).